A 405-amino-acid polypeptide reads, in one-letter code: Bestrophin homolog 14 (405 aa).

A run of 4 helical transmembrane segments spans residues 28–48 (LIGFYIAYYIVLAFQWYLLDE), 63–83 (IGAQYIPLSFLLGFFVSLIVA), 223–243 (LVYTQVVAIATYGYFFICLIG), and 256–276 (EITILFPIFTTFQMLFYLGWL).

This sequence belongs to the anion channel-forming bestrophin (TC 1.A.46) family. Calcium-sensitive chloride channel subfamily.

The protein resides in the membrane. This Caenorhabditis elegans protein is Bestrophin homolog 14 (best-14).